Reading from the N-terminus, the 82-residue chain is Exodeoxyribonuclease 7 small subunit (82 aa).

This sequence belongs to the XseB family. As to quaternary structure, heterooligomer composed of large and small subunits.

Its subcellular location is the cytoplasm. It carries out the reaction Exonucleolytic cleavage in either 5'- to 3'- or 3'- to 5'-direction to yield nucleoside 5'-phosphates.. Functionally, bidirectionally degrades single-stranded DNA into large acid-insoluble oligonucleotides, which are then degraded further into small acid-soluble oligonucleotides. The chain is Exodeoxyribonuclease 7 small subunit from Mycobacterium marinum (strain ATCC BAA-535 / M).